The following is a 375-amino-acid chain: 23S rRNA (uracil(747)-C(5))-methyltransferase RlmC (375 aa).

The [4Fe-4S] cluster site is built by Cys-3, Cys-11, Cys-14, and Cys-87. Gln-212, Phe-241, Glu-262, and Asn-307 together coordinate S-adenosyl-L-methionine. The Nucleophile role is filled by Cys-334.

It belongs to the class I-like SAM-binding methyltransferase superfamily. RNA M5U methyltransferase family. RlmC subfamily.

It catalyses the reaction uridine(747) in 23S rRNA + S-adenosyl-L-methionine = 5-methyluridine(747) in 23S rRNA + S-adenosyl-L-homocysteine + H(+). Functionally, catalyzes the formation of 5-methyl-uridine at position 747 (m5U747) in 23S rRNA. The polypeptide is 23S rRNA (uracil(747)-C(5))-methyltransferase RlmC (Escherichia fergusonii (strain ATCC 35469 / DSM 13698 / CCUG 18766 / IAM 14443 / JCM 21226 / LMG 7866 / NBRC 102419 / NCTC 12128 / CDC 0568-73)).